Consider the following 334-residue polypeptide: Beta-glucanase (334 aa).

The first 27 residues, 1–27, serve as a signal peptide directing secretion; sequence MKNRVISLLMASLLLVLSVIVAPFYKA. Residues 28 to 248 enclose the GH16 domain; the sequence is EAATVVNTPF…YVKYYPNGVP (221 aa). The active-site Nucleophile is Glu-136. Residue Glu-140 is the Proton donor of the active site. The Dockerin domain occupies 267–334; sequence NLPLKGDVNG…RYLIRAIPSL (68 aa).

This sequence belongs to the glycosyl hydrolase 16 family. In terms of assembly, may form part of a multienzyme complex (cellulosome).

The catalysed reaction is Hydrolysis of (1-&gt;4)-beta-D-glucosidic linkages in beta-D-glucans containing (1-&gt;3)- and (1-&gt;4)-bonds.. This Acetivibrio thermocellus (strain ATCC 27405 / DSM 1237 / JCM 9322 / NBRC 103400 / NCIMB 10682 / NRRL B-4536 / VPI 7372) (Clostridium thermocellum) protein is Beta-glucanase (licB).